We begin with the raw amino-acid sequence, 179 residues long: Cytoglobin-2 (179 aa).

One can recognise a Globin domain in the interval 18–167 (PLSDAEMEII…VYWHVTGAYT (150 aa)). Positions 81 and 113 each coordinate heme b.

The protein belongs to the globin family. Monomeric.

The protein resides in the cytoplasm. It localises to the nucleus. It carries out the reaction Fe(II)-heme b-[protein] + nitric oxide + O2 = Fe(III)-heme b-[protein] + nitrate. It catalyses the reaction Fe(III)-heme b-[protein] + nitric oxide + H2O = Fe(II)-heme b-[protein] + nitrite + 2 H(+). The enzyme catalyses 2 superoxide + 2 H(+) = H2O2 + O2. The catalysed reaction is H2O2 + AH2 = A + 2 H2O. Its function is as follows. Probable multifunctional globin with a hexacoordinated heme iron required for the catalysis of various reactions depending on redox condition of the cell as well as oxygen availability. Has a nitric oxide dioxygenase (NOD) activity and is most probably involved in cell-mediated and oxygen-dependent nitric oxide consumption. Under normoxic conditions functions as a nitric oxide dioxygenase (NOD) but under hypoxic conditions the globin may switch its function to that of a nitrite (NO2) reductase (NiR), generating nitric oxide. Could also have peroxidase and superoxide dismutase activities, detoxifying reactive oxygen species and protecting cells against oxidative stress. Also binds dioxygen with low affinity and could function as an oxygen sensor but has probably no function as a respiratory oxygen carrier. This Oryzias latipes (Japanese rice fish) protein is Cytoglobin-2.